Consider the following 417-residue polypeptide: Fructose-1,6-bisphosphatase 1, chloroplastic (417 aa).

The transit peptide at 1–59 (MAATAATTTSSHLLLSSSRHVASSSQPSILSPRSLFSNNGKRAPTGVRNHQYASGVRCM) directs the protein to the chloroplast. Residues 24–35 (SSQPSILSPRSL) show a composition bias toward low complexity. A disordered region spans residues 24 to 48 (SSQPSILSPRSLFSNNGKRAPTGVR). Ala60 is subject to N-acetylalanine. Residues Glu138, Glu167, Asp188, Leu190, and Asp191 each contribute to the Mg(2+) site. 191-194 (DGSS) contributes to the substrate binding site. Cys233 and Cys238 are disulfide-bonded. The substrate site is built by Asn297, Tyr329, Tyr347, Tyr349, and Lys359. A Mg(2+)-binding site is contributed by Glu365.

This sequence belongs to the FBPase class 1 family. As to quaternary structure, homotetramer. It depends on Mg(2+) as a cofactor.

The protein resides in the plastid. It is found in the chloroplast stroma. The enzyme catalyses beta-D-fructose 1,6-bisphosphate + H2O = beta-D-fructose 6-phosphate + phosphate. Its pathway is carbohydrate biosynthesis; Calvin cycle. Catalyzes the irreversible reaction from fructose-1,6-bisphosphate to fructose-6-phosphate and inorganic phosphate, to regenerate the primary CO(2) acceptor molecule, ribulose-1,5-bisphosphate. Involved in the regulation of photosynthetic electron flow and sucrose synthesis. Its activity is critical for normal plant development and important for the regulation of a wide range of metabolic processes. This is Fructose-1,6-bisphosphatase 1, chloroplastic from Arabidopsis thaliana (Mouse-ear cress).